The chain runs to 217 residues: uncharacterized protein (217 aa).

This is an uncharacterized protein from Homo sapiens (Human).